Consider the following 458-residue polypeptide: MSDNKFIIGSEEWCAFPALGVPAIKARVDSGARTSSIHAVNIRPFKREGEPWVSFELHPIQNSRKIILRCESKVIDRRNIKSSNGEIEKRYVIASVIQLGGHAWEVELTLTNRDSMGYRMLLGREAMSNKTLVDPSESFCLGQQNDVEVEQLYGVKSAKKSGLKIGLLASNPDLYSNRRIIEAGEQRGHEMVFLNIKQCYLKLDASEPEVHYRGGRILNDLDAVIPRIRPSMTFYGCALTRHFESLNIMALNTSDAITRSRDKLFSLQLLQKNNLDIPTSGFANSPVDTKDLIDMVGGAPLIVKLLEGTQGKGVVLAETTKAAESVINAFKSLHVNLLVQEFIKEAQGKDLRCFVIDGKVVASIERTAAPGEFRANIHQGGSASIVSVSAAERQLALKAAKTMGLRVAGVDIIRSSRGPLLLEINSSPGLEGIESATGIDIAGAMIDSIEKKLGWKAE.

A unknown region spans residues 1 to 162; it reads MSDNKFIIGS…YGVKSAKKSG (162 aa). An alpha-L-glutamate ligase region spans residues 163-458; it reads LKIGLLASNP…IEKKLGWKAE (296 aa). Positions 267 to 450 constitute an ATP-grasp domain; that stretch reads LQLLQKNNLD…IAGAMIDSIE (184 aa). ATP-binding positions include lysine 304, 341-342, aspartate 350, and 374-376; these read EF and RAN. Mg(2+) is bound by residues aspartate 411, glutamate 423, and asparagine 425. 3 residues coordinate Mn(2+): aspartate 411, glutamate 423, and asparagine 425.

This sequence in the C-terminal section; belongs to the RimK family. Mg(2+) is required as a cofactor. The cofactor is Mn(2+).

The protein is Probable alpha-L-glutamate ligase of Shewanella halifaxensis (strain HAW-EB4).